The sequence spans 135 residues: Large ribosomal subunit protein uL16c (135 aa).

This sequence belongs to the universal ribosomal protein uL16 family. As to quaternary structure, part of the 50S ribosomal subunit.

It is found in the plastid. It localises to the chloroplast. In Lepidium virginicum (Virginia pepperweed), this protein is Large ribosomal subunit protein uL16c.